The following is a 379-amino-acid chain: 23S rRNA (uracil(747)-C(5))-methyltransferase RlmC (379 aa).

Residues C3, C11, C14, and C87 each coordinate [4Fe-4S] cluster. Residues Q212, F241, E262, and N309 each coordinate S-adenosyl-L-methionine. C336 (nucleophile) is an active-site residue.

It belongs to the class I-like SAM-binding methyltransferase superfamily. RNA M5U methyltransferase family. RlmC subfamily.

The catalysed reaction is uridine(747) in 23S rRNA + S-adenosyl-L-methionine = 5-methyluridine(747) in 23S rRNA + S-adenosyl-L-homocysteine + H(+). Its function is as follows. Catalyzes the formation of 5-methyl-uridine at position 747 (m5U747) in 23S rRNA. In Shewanella loihica (strain ATCC BAA-1088 / PV-4), this protein is 23S rRNA (uracil(747)-C(5))-methyltransferase RlmC.